The following is a 76-amino-acid chain: Small ribosomal subunit protein bS21C (76 aa).

The tract at residues 52 to 76 is disordered; that stretch reads GRQRKLARKQMQREGLLPTKPRKDK.

The protein belongs to the bacterial ribosomal protein bS21 family.

The chain is Small ribosomal subunit protein bS21C (rpsU3) from Agrobacterium fabrum (strain C58 / ATCC 33970) (Agrobacterium tumefaciens (strain C58)).